The following is a 486-amino-acid chain: Aspartyl/glutamyl-tRNA(Asn/Gln) amidotransferase subunit B (486 aa).

It belongs to the GatB/GatE family. GatB subfamily. In terms of assembly, heterotrimer of A, B and C subunits.

The catalysed reaction is L-glutamyl-tRNA(Gln) + L-glutamine + ATP + H2O = L-glutaminyl-tRNA(Gln) + L-glutamate + ADP + phosphate + H(+). It carries out the reaction L-aspartyl-tRNA(Asn) + L-glutamine + ATP + H2O = L-asparaginyl-tRNA(Asn) + L-glutamate + ADP + phosphate + 2 H(+). Allows the formation of correctly charged Asn-tRNA(Asn) or Gln-tRNA(Gln) through the transamidation of misacylated Asp-tRNA(Asn) or Glu-tRNA(Gln) in organisms which lack either or both of asparaginyl-tRNA or glutaminyl-tRNA synthetases. The reaction takes place in the presence of glutamine and ATP through an activated phospho-Asp-tRNA(Asn) or phospho-Glu-tRNA(Gln). This Herminiimonas arsenicoxydans protein is Aspartyl/glutamyl-tRNA(Asn/Gln) amidotransferase subunit B.